Reading from the N-terminus, the 429-residue chain is 3-phosphoshikimate 1-carboxyvinyltransferase (429 aa).

3-phosphoshikimate-binding residues include lysine 23, serine 24, and arginine 28. Lysine 23 contacts phosphoenolpyruvate. Residues glycine 95 and arginine 123 each contribute to the phosphoenolpyruvate site. Residues serine 168, glutamine 170, aspartate 316, and lysine 343 each contribute to the 3-phosphoshikimate site. Position 170 (glutamine 170) interacts with phosphoenolpyruvate. The active-site Proton acceptor is aspartate 316. Positions 347 and 389 each coordinate phosphoenolpyruvate.

This sequence belongs to the EPSP synthase family. Monomer.

It is found in the cytoplasm. It catalyses the reaction 3-phosphoshikimate + phosphoenolpyruvate = 5-O-(1-carboxyvinyl)-3-phosphoshikimate + phosphate. The protein operates within metabolic intermediate biosynthesis; chorismate biosynthesis; chorismate from D-erythrose 4-phosphate and phosphoenolpyruvate: step 6/7. In terms of biological role, catalyzes the transfer of the enolpyruvyl moiety of phosphoenolpyruvate (PEP) to the 5-hydroxyl of shikimate-3-phosphate (S3P) to produce enolpyruvyl shikimate-3-phosphate and inorganic phosphate. This is 3-phosphoshikimate 1-carboxyvinyltransferase from Bacillus cereus (strain ZK / E33L).